The chain runs to 211 residues: Major fimbrial subunit (211 aa).

An N-terminal signal peptide occupies residues 1–20; the sequence is MKKTLLGSLILLAFAGNVQA. C43 and C83 form a disulfide bridge.

The protein belongs to the fimbrial protein family.

The protein localises to the fimbrium. Mediates adherence to oropharyngeal epithelial cells. Helps the airway colonization process. The sequence is that of Major fimbrial subunit (hifA) from Haemophilus influenzae.